The sequence spans 34 residues: MLMILWFFNQIARCRVNFTGGDGYKPIILYHVIH.

This is an uncharacterized protein from Saccharomyces cerevisiae (strain ATCC 204508 / S288c) (Baker's yeast).